The chain runs to 65 residues: Adrenergic toxin rho-elapitoxin-Dp1b (65 aa).

Disulfide bonds link Cys3/Cys24, Cys17/Cys42, Cys46/Cys57, and Cys58/Cys63.

Belongs to the three-finger toxin family. Short-chain subfamily. Aminergic toxin sub-subfamily. Expressed by the venom gland.

It is found in the secreted. In terms of biological role, highly potent on various alpha-adrenoceptors (ADRA) (subnanomolar affinity for ADRA1A). Order of potency is the following: ADRA1A (Ki=0.37 nM) &gt; ADRA1B (Ki=10.47 nM) &gt; ADRA1D (Ki=104.71 nM) &gt; ADRA2C (Ki=165.96 nM). Were also found to reversibly bind to muscarinic acetylcholine receptors (CHRM), but the affinity is much weaker (CHRM1, Ki=1778.28 nM; CHRM4, Ki=4466.84 nM; CHRM2, Ki=17782.79 nM). The protein is Adrenergic toxin rho-elapitoxin-Dp1b of Dendroaspis polylepis polylepis (Black mamba).